A 61-amino-acid polypeptide reads, in one-letter code: Short neurotoxin 2 (61 aa).

4 disulfide bridges follow: Cys-3–Cys-23, Cys-17–Cys-40, Cys-42–Cys-53, and Cys-54–Cys-59.

The protein belongs to the three-finger toxin family. Short-chain subfamily. Type I alpha-neurotoxin sub-subfamily. In terms of tissue distribution, expressed by the venom gland.

Its subcellular location is the secreted. Its function is as follows. Binds to muscle nicotinic acetylcholine receptor (nAChR) and inhibit acetylcholine from binding to the receptor, thereby impairing neuromuscular transmission. The sequence is that of Short neurotoxin 2 from Hemachatus haemachatus (Rinkhals).